We begin with the raw amino-acid sequence, 482 residues long: Hydrogenase transcriptional regulatory protein HoxA (482 aa).

Positions 7–121 (TVLVVDDETR…HLIDTVRQAV (115 aa)) constitute a Response regulatory domain. Residue aspartate 55 is modified to 4-aspartylphosphate. Residues 167–394 (APGSPLDAVC…LRNEIYRAVA (228 aa)) enclose the Sigma-54 factor interaction domain. Residues 193 to 200 (GESGTGKE) and 265 to 274 (EIGDTSPAFQ) contribute to the ATP site. A DNA-binding region (H-T-H motif) is located at residues 456 to 475 (KTHAAKELGLSRVGLRQKLL).

The protein localises to the cytoplasm. Probable member of the two-component regulatory system involved in the regulation of the hydrogenase activity. HoxA is probably phosphorylated by a sensory component (which could be HoxX) and then acts in conjunction with sigma-54 as a transcriptional activator. This chain is Hydrogenase transcriptional regulatory protein HoxA (hoxA), found in Cupriavidus necator (strain ATCC 17699 / DSM 428 / KCTC 22496 / NCIMB 10442 / H16 / Stanier 337) (Ralstonia eutropha).